A 788-amino-acid polypeptide reads, in one-letter code: Leucine-rich repeat and fibronectin type-III domain-containing protein 2 (788 aa).

The signal sequence occupies residues 1–20; that stretch reads METLLGGLLAFGMAFAVVDA. The LRRNT domain maps to 21–52; sequence CPKYCVCQNLSESLGTLCPSKGLLFVPPDIDR. The Extracellular portion of the chain corresponds to 21-534; that stretch reads CPKYCVCQNL…MHSQILGGTM (514 aa). 2 N-linked (GlcNAc...) asparagine glycosylation sites follow: asparagine 29 and asparagine 74. 7 LRR repeats span residues 53-74, 77-98, 101-122, 125-146, 150-171, 174-195, and 198-219; these read RTVE…DFAN, GLVD…SFLD, SLRS…TLRG, NLQH…AFED, TLED…SVRR, NLHQ…TFAD, and KLAR…PIFA. The LRRCT domain occupies 242 to 288; it reads NPLHCNCELLWLRRLERDDDLKTCGSPGGLKGRYFWHIREEEFVCEP. An Ig-like domain is found at 289-375; it reads PLITQHTHKL…GEATATVEVS (87 aa). Cysteine 310 and cysteine 359 are disulfide-bonded. Residues asparagine 332, asparagine 341, asparagine 384, and asparagine 457 are each glycosylated (N-linked (GlcNAc...) asparagine). A disordered region spans residues 383-423; it reads SNSTSRMAPPKSRLSDITGSSKTSRGGGGSGAGEPPKSTPE. The region spanning 422–518 is the Fibronectin type-III domain; that stretch reads PERAVLVSDV…GCAQFFTKAD (97 aa). Residues 535 to 555 traverse the membrane as a helical segment; the sequence is ILVIGGIIVATLLVFIVILMV. Residues 556–788 are Cytoplasmic-facing; sequence RYKVCNHDAP…SSEWVMESTV (233 aa). Residues 620–641 are compositionally biased toward low complexity; sequence CDSSSSSSLGSGEAAGLSRGPW. Disordered regions lie at residues 620-655 and 668-707; these read CDSS…PSLD and SQRK…ATRA. Over residues 642 to 651 the composition is skewed to pro residues; sequence RLPPPAPRPK. The short motif at 785–788 is the PDZ-binding element; it reads ESTV.

The protein belongs to the LRFN family. As to quaternary structure, forms heteromeric complexes with LRFN1, LRFN3 and LRFN4. Can form homomeric complexes, but not across cell junctions. Can form heteromeric complexes with LRFN5. Interacts with DLG1, DLG3 and DLG4; interaction with DLG4 is mediated by the PDZ-binding domain. Also interacts with DLG2. Interacts with 2 NMDA receptor subunits GRIN1 and GRIN2A.

It is found in the membrane. The protein resides in the synapse. Its subcellular location is the postsynaptic cell membrane. Its function is as follows. Promotes neurite outgrowth in hippocampal neurons. Enhances the cell surface expression of GRIN1 and GRIN2A NMDA receptor subunits. May play a role in redistributing DLG4 to the cell periphery. The sequence is that of Leucine-rich repeat and fibronectin type-III domain-containing protein 2 (Lrfn2) from Rattus norvegicus (Rat).